The following is a 148-amino-acid chain: Large ribosomal subunit protein uL13 (148 aa).

The protein belongs to the universal ribosomal protein uL13 family. Part of the 50S ribosomal subunit.

This protein is one of the early assembly proteins of the 50S ribosomal subunit, although it is not seen to bind rRNA by itself. It is important during the early stages of 50S assembly. This is Large ribosomal subunit protein uL13 from Ureaplasma urealyticum serovar 10 (strain ATCC 33699 / Western).